A 474-amino-acid chain; its full sequence is Alginate biosynthesis protein AlgX (474 aa).

Residues 1-26 (MKTRTSRLFRLSALAAGLCLAQAALA) form the signal peptide. An SGNH hydrolase-like domain region spans residues 27 to 347 (ADPGAAPSYQ…QAMPLVDNGC (321 aa)). Residues Cys-44 and Cys-229 are joined by a disulfide bond. Asp-174 is an active-site residue. Catalysis depends on His-176, which acts as the Proton acceptor. Ser-269 functions as the Nucleophile in the catalytic mechanism. Cys-347 and Cys-460 are disulfide-bonded. Residues 348–474 (SGRKTVLSRK…AKASQSVAGR (127 aa)) form a CBM domain region.

The protein belongs to the AlgX family. Monomer. Interacts with AlgK and MucD.

Its subcellular location is the periplasm. Its pathway is glycan biosynthesis; alginate biosynthesis. Functionally, plays two roles in the biosynthesis of the exopolysaccharide alginate: protects alginate from degradation as the polymer traverses the periplasm, and also plays a role in its O-acetylation. Acetylation of alginate causes the cells in the biofilm to adhere better to lung epithelium, form microcolonies, and resist the effects of the host immune system and/or antibiotics. Displays a low acetylesterase activity in vitro using a pseudosubstrate, 3-carboxyumbelliferyl acetate. Probably has acetyltransferase activity in vivo. The chain is Alginate biosynthesis protein AlgX (algX) from Pseudomonas aeruginosa (strain ATCC 15692 / DSM 22644 / CIP 104116 / JCM 14847 / LMG 12228 / 1C / PRS 101 / PAO1).